The sequence spans 970 residues: Pentatricopeptide repeat-containing protein At1g18485 (970 aa).

PPR repeat units lie at residues Asp-119–Lys-149, Asn-150–Pro-185, Asp-186–Glu-220, Asp-221–Arg-251, Asn-252–Glu-282, Asp-291–Lys-325, Glu-326–Lys-356, Asn-357–Val-391, Asp-394–Tyr-428, Asn-429–Lys-459, Thr-460–Pro-494, Asp-495–Arg-529, Asp-530–Lys-560, Ser-561–Leu-595, Gly-597–Asp-630, Asp-631–Lys-661, Ser-662–Pro-696, Asp-697–Ser-727, and Asn-733–Glu-764. Residues Trp-770–Arg-845 form a type E motif region. Positions Lys-846–Ser-875 are type E(+) motif. Positions Lys-876–Trp-970 are type DYW motif.

It belongs to the PPR family. PCMP-H subfamily.

This is Pentatricopeptide repeat-containing protein At1g18485 (PCMP-H8) from Arabidopsis thaliana (Mouse-ear cress).